A 468-amino-acid polypeptide reads, in one-letter code: UDP-glycosyltransferase 89B2 (468 aa).

Residues S287, 347-348 (WV), 365-373 (HCGWNSVME), and 387-390 (SADQ) each bind UDP-alpha-D-glucose.

This sequence belongs to the UDP-glycosyltransferase family.

Functionally, may glycosylate diterpenes or flavonols in leaves. This is UDP-glycosyltransferase 89B2 from Stevia rebaudiana (Stevia).